The following is a 490-amino-acid chain: Cytochrome P450 71D11 (490 aa).

Residue Cys427 coordinates heme.

Belongs to the cytochrome P450 family. Heme serves as cofactor.

The sequence is that of Cytochrome P450 71D11 (CYP71D11) from Lotus japonicus (Lotus corniculatus var. japonicus).